A 319-amino-acid chain; its full sequence is Beta-ketoacyl-[acyl-carrier-protein] synthase III (319 aa).

Residues C110 and H246 contribute to the active site. Positions 247-251 (QANYR) are ACP-binding. N276 is an active-site residue.

This sequence belongs to the thiolase-like superfamily. FabH family. Homodimer.

It is found in the cytoplasm. It carries out the reaction malonyl-[ACP] + acetyl-CoA + H(+) = 3-oxobutanoyl-[ACP] + CO2 + CoA. It functions in the pathway lipid metabolism; fatty acid biosynthesis. Its function is as follows. Catalyzes the condensation reaction of fatty acid synthesis by the addition to an acyl acceptor of two carbons from malonyl-ACP. Catalyzes the first condensation reaction which initiates fatty acid synthesis and may therefore play a role in governing the total rate of fatty acid production. Possesses both acetoacetyl-ACP synthase and acetyl transacylase activities. Its substrate specificity determines the biosynthesis of branched-chain and/or straight-chain of fatty acids. The polypeptide is Beta-ketoacyl-[acyl-carrier-protein] synthase III (Lactobacillus delbrueckii subsp. bulgaricus (strain ATCC 11842 / DSM 20081 / BCRC 10696 / JCM 1002 / NBRC 13953 / NCIMB 11778 / NCTC 12712 / WDCM 00102 / Lb 14)).